We begin with the raw amino-acid sequence, 718 residues long: Tegument protein UL46 (718 aa).

Disordered stretches follow at residues 433–510 (SAGP…EPPA) and 581–611 (TADDDDDDARRKATHAASARERHAPYEDDES). A compositionally biased stretch (gly residues) spans 444-454 (GPGGHRAGGGT). Basic and acidic residues predominate over residues 455–467 (CREKIQRARRDNE).

This sequence belongs to the herpesviridae HHV-1 VP11/12 protein family. In terms of assembly, interacts with VP16. Interacts with host LCK, PIK3R1, SHC1 AND GRB2; these interactions promote the activation of the PI3K/AKT pathway. Interacts with host YWHAB. Interacts with ICP0; this interaction targets UL46 for degradation by the proteasome. Interacts (via N-terminus) with host TMEM173. Interacts (via C-terminus) with host TBK1. Interacts with host DOK2. In terms of processing, phosphorylated by host LCK. The phosphorylation seems to be lymphocyte-specific.

The protein localises to the virion tegument. Its subcellular location is the host cytoplasm. The protein resides in the host cell membrane. Its function is as follows. Plays a role in the activation of the host PI3K/AKT pathway to promote cell survival. Interacts with and activates host LCK and thereby recruits downstream partners SHC1, GRB2 and PI3KR1 in order to activate the PI3K pathway by phosphorylating host AKT on its activating residues. This mechanism is inhibited by the viral protein US3 that instead promotes incorporation of UL46 into virions. Plays a role in the inhibition of TMEM173/STING-mediated type I interferon production. Interacts with host DOK2 and induces its degradation. This immune evasion mechanism to inactivate T-cells may play an important role during pathogenesis. The polypeptide is Tegument protein UL46 (Homo sapiens (Human)).